The primary structure comprises 273 residues: Proteasome subunit beta (273 aa).

Residues 1-50 (MRKDGARLALPLFDPRHDPGPDFAALVSRDAARTVPTSGDGSLGAQVPHG) constitute a propeptide, removed in mature form; by autocatalysis. Threonine 51 acts as the Nucleophile in catalysis.

The protein belongs to the peptidase T1B family. In terms of assembly, the 20S proteasome core is composed of 14 alpha and 14 beta subunits that assemble into four stacked heptameric rings, resulting in a barrel-shaped structure. The two inner rings, each composed of seven catalytic beta subunits, are sandwiched by two outer rings, each composed of seven alpha subunits. The catalytic chamber with the active sites is on the inside of the barrel. Has a gated structure, the ends of the cylinder being occluded by the N-termini of the alpha-subunits. Is capped by the proteasome-associated ATPase, ARC.

The protein localises to the cytoplasm. It carries out the reaction Cleavage of peptide bonds with very broad specificity.. The protein operates within protein degradation; proteasomal Pup-dependent pathway. With respect to regulation, the formation of the proteasomal ATPase ARC-20S proteasome complex, likely via the docking of the C-termini of ARC into the intersubunit pockets in the alpha-rings, may trigger opening of the gate for substrate entry. Interconversion between the open-gate and close-gate conformations leads to a dynamic regulation of the 20S proteasome proteolysis activity. Its function is as follows. Component of the proteasome core, a large protease complex with broad specificity involved in protein degradation. The polypeptide is Proteasome subunit beta (Acidimicrobium ferrooxidans (strain DSM 10331 / JCM 15462 / NBRC 103882 / ICP)).